A 325-amino-acid polypeptide reads, in one-letter code: Methionyl-tRNA formyltransferase (325 aa).

113–116 lines the (6S)-5,6,7,8-tetrahydrofolate pocket; that stretch reads SLLP.

The protein belongs to the Fmt family.

It carries out the reaction L-methionyl-tRNA(fMet) + (6R)-10-formyltetrahydrofolate = N-formyl-L-methionyl-tRNA(fMet) + (6S)-5,6,7,8-tetrahydrofolate + H(+). Functionally, attaches a formyl group to the free amino group of methionyl-tRNA(fMet). The formyl group appears to play a dual role in the initiator identity of N-formylmethionyl-tRNA by promoting its recognition by IF2 and preventing the misappropriation of this tRNA by the elongation apparatus. This is Methionyl-tRNA formyltransferase from Chromohalobacter salexigens (strain ATCC BAA-138 / DSM 3043 / CIP 106854 / NCIMB 13768 / 1H11).